The following is a 1801-amino-acid chain: Laminin subunit beta-2 (1801 aa).

A signal peptide spans 1-35 (MEWASGKPGRGRQGQPVPWELRLGLLLSVLAATLA). The Laminin N-terminal domain maps to 46-285 (SRGSCYPATG…ALYELVIRGN (240 aa)). N-linked (GlcNAc...) asparagine glycosylation is present at Asn251. 19 cysteine pairs are disulfide-bonded: Cys286–Cys295, Cys288–Cys313, Cys315–Cys324, Cys327–Cys347, Cys350–Cys359, Cys352–Cys377, Cys380–Cys389, Cys392–Cys410, Cys413–Cys426, Cys415–Cys441, Cys443–Cys452, Cys455–Cys470, Cys473–Cys487, Cys475–Cys494, Cys496–Cys505, Cys508–Cys522, Cys525–Cys537, Cys527–Cys544, and Cys546–Cys555. 4 consecutive Laminin EGF-like domains span residues 286–349 (CFCY…ACRK), 350–412 (CECN…ACRP), 413–472 (CDCD…GCQR), and 473–524 (CQCN…GCRP). An N-linked (GlcNAc...) asparagine glycan is attached at Asn371. Positions 525-555 (CDCDVGGALDPQCDEATGQCPCRPHMIGRRC) constitute a Laminin EGF-like 5; truncated domain. Residues 564–780 (RPFLDHLTWE…LLISASSLVY (217 aa)) form the Laminin IV type B domain. 32 cysteine pairs are disulfide-bonded: Cys786–Cys798, Cys788–Cys805, Cys807–Cys816, Cys819–Cys831, Cys834–Cys846, Cys836–Cys853, Cys855–Cys864, Cys867–Cys877, Cys880–Cys889, Cys882–Cys896, Cys899–Cys908, Cys911–Cys927, Cys930–Cys946, Cys932–Cys957, Cys959–Cys968, Cys971–Cys986, Cys989–Cys1003, Cys991–Cys1010, Cys1013–Cys1022, Cys1025–Cys1038, Cys1041–Cys1061, Cys1043–Cys1068, Cys1070–Cys1079, Cys1082–Cys1095, Cys1098–Cys1110, Cys1100–Cys1117, Cys1119–Cys1128, Cys1131–Cys1143, Cys1146–Cys1158, Cys1148–Cys1165, Cys1167–Cys1176, and Cys1179–Cys1190. Laminin EGF-like domains follow at residues 786–833 (CQCD…GCQA), 834–879 (CQCS…NCRP), 880–929 (CVCN…QCRP), 930–988 (CPCP…RCQL), 989–1040 (CECS…SCHR), 1041–1097 (CTCN…GCQP), 1098–1145 (CACH…QCRA), and 1146–1192 (CDCD…ACHP). N-linked (GlcNAc...) asparagine glycosylation occurs at Asn1088. Positions 1193–1412 (CHACFGDWDR…LSLTGVNELV (220 aa)) are domain II. A glycan (N-linked (GlcNAc...) asparagine) is linked at Asn1252. A coiled-coil region spans residues 1259 to 1306 (AKLVEATEGLRHEIGKTTERLTQLEAELTDVQDENFNANHALSGLERD). N-linked (GlcNAc...) asparagine glycosylation is found at Asn1311 and Asn1351. Residues 1413-1445 (CGAPGDAPCATSPCGGAGCRDEDGQPRCGGLGC) are domain alpha. The domain I stretch occupies residues 1446–1801 (SGAAATADLA…LQVQIYNTCQ (356 aa)). Residues 1475-1529 (GILSRVSETRRQAEEAQQRAQAALDKANASRGQVEQANQELRELIQNVKDFLSQE) are a coiled coil. N-linked (GlcNAc...) asparagine glycosylation is present at Asn1502. Ser1535 carries the post-translational modification Phosphoserine. The stretch at 1576 to 1793 (LAHTMGDVRR…RSVLQAINLQ (218 aa)) forms a coiled coil. Low complexity predominate over residues 1684–1694 (ASTAEETAGSA). The segment at 1684–1703 (ASTAEETAGSAQSRAREAEK) is disordered.

In terms of assembly, laminin is a complex glycoprotein, consisting of three different polypeptide chains (alpha, beta, gamma), which are bound to each other by disulfide bonds into a cross-shaped molecule comprising one long and three short arms with globules at each end. Beta-2 is a subunit of laminin-3 (laminin-121 or S-laminin), laminin-4 (laminin-221 or S-merosin), laminin-7 (laminin-321 or KS-laminin), laminin-9 (laminin-421), laminin-11 (laminin-521), laminin-14 (laminin-423) and laminin-15 (laminin-523). As to expression, found in the basement membranes (major component). S-laminin is concentrated in the synaptic cleft of the neuromuscular junction.

The protein localises to the secreted. Its subcellular location is the extracellular space. The protein resides in the extracellular matrix. It is found in the basement membrane. Its function is as follows. Binding to cells via a high affinity receptor, laminin is thought to mediate the attachment, migration and organization of cells into tissues during embryonic development by interacting with other extracellular matrix components. In Rattus norvegicus (Rat), this protein is Laminin subunit beta-2 (Lamb2).